A 167-amino-acid chain; its full sequence is uncharacterized protein (167 aa).

It localises to the virion. This is an uncharacterized protein from Acanthamoeba polyphaga (Amoeba).